Reading from the N-terminus, the 1324-residue chain is Myotubularin-related protein DDB_G0290005 (1324 aa).

The tract at residues 140–276 is disordered; it reads KYHDNTTPNN…TSSTNGNCST (137 aa). Positions 144-180 are enriched in low complexity; it reads NTTPNNNNNNNNNNNNNNNNTNNNNNNNINKSNNSST. Residues 181-194 are compositionally biased toward polar residues; that stretch reads DQLNSFSLEKQPSQ. Residues 195-222 are compositionally biased toward low complexity; that stretch reads NENLNNNNNNNNNNNNGNNNINNNNLMN. Residues 223-247 show a composition bias toward polar residues; sequence SLTQPSTSSRSRLLKSNSTPINLNE. Low complexity predominate over residues 248–276; sequence SSTSTNSPTLSSTTTTTTTTSSTNGNCST. One can recognise a Myotubularin phosphatase domain in the interval 349–807; sequence GWLFYDPIEE…KGVQLWSDYF (459 aa). Substrate contacts are provided by residues 514 to 515, 575 to 581, and arginine 621; these read NI and CIDGWDR. Cysteine 575 acts as the Phosphocysteine intermediate in catalysis. 5 disordered regions span residues 624-664, 841-1043, 1066-1110, 1144-1213, and 1232-1296; these read QSIS…TTTS, QKKK…QQQE, EQQE…QQQT, RKQE…LTMP, and LHPN…DNTS. Low complexity-rich tracts occupy residues 625 to 664 and 852 to 864; these read SISS…TTTS and GASG…SGSS. Residues 865–882 show a composition bias toward basic residues; that stretch reads SKHHHHHHHHHHHHHHRK. Over residues 883–894 the composition is skewed to basic and acidic residues; sequence STDEKDSKEKSS. 2 stretches are compositionally biased toward low complexity: residues 899 to 914 and 927 to 973; these read SRTS…STSS and TITT…TTTP. Positions 988–1002 are enriched in basic and acidic residues; that stretch reads DKLKSPSGDDIKQEQ. The span at 1005–1024 shows a compositional bias: polar residues; sequence MNQFTSQHPNNQMESSSEIN. Residues 1020–1195 adopt a coiled-coil conformation; that stretch reads SSEINQQNEQ…LEQQKPKADI (176 aa). The segment covering 1025 to 1043 has biased composition (low complexity); sequence QQNEQSQLEQQQEQQQQQE. Over residues 1079–1090 the composition is skewed to polar residues; the sequence is PNETITYSMESD. Residues 1091–1109 show a composition bias toward low complexity; sequence SQSSISQNQNQLQQQQQQQ. Basic and acidic residues predominate over residues 1144–1193; it reads RKQEKEKRKLEKEKKQKERAERKLEKEKKRDQKEREQKEKELLEQQKPKA. The segment covering 1234 to 1243 has biased composition (polar residues); the sequence is PNLSDQNSQT. Composition is skewed to low complexity over residues 1244–1258 and 1265–1294; these read NSSG…NSPN and SNLS…NNDN.

Belongs to the protein-tyrosine phosphatase family. Non-receptor class myotubularin subfamily.

The protein resides in the cytoplasm. Its function is as follows. Phosphatase that acts on lipids with a phosphoinositol headgroup. The sequence is that of Myotubularin-related protein DDB_G0290005 from Dictyostelium discoideum (Social amoeba).